The following is a 305-amino-acid chain: MLDTSIQALINKWQKYLVLQRNYSNHTVISYNNDLKHFLEFMNYYNSELVTINHIKTADIRLIRSWLAKRNCDNFAASSISRGLSAVKNFYRFLEKTTQLNSHIIFSIKSPKKTKLLPKALSEDDVVISLEHIEEYGNIKWVELRNKALLVLIYASGLRISEALSITKLHLQNLEFIRIIGKGSKERIIPWLPIAKNLITQYLEILPYKLGDNEPIFRGKQGKKLQPPVFNRELIKLKHFYGLPQHLTAHSFRHSFASHLLEHGADLRSLQALLGHKSLSTTQNYTKTSIKHLEAVYTTAYPIKK.

Residues T4–E95 enclose the Core-binding (CB) domain. The Tyr recombinase domain occupies L116–T298. Catalysis depends on residues R159, K182, H250, R253, and H276. Y285 serves as the catalytic O-(3'-phospho-DNA)-tyrosine intermediate.

This sequence belongs to the 'phage' integrase family. XerC subfamily. Forms a cyclic heterotetrameric complex composed of two molecules of XerC and two molecules of XerD.

Its subcellular location is the cytoplasm. Functionally, site-specific tyrosine recombinase, which acts by catalyzing the cutting and rejoining of the recombining DNA molecules. The XerC-XerD complex is essential to convert dimers of the bacterial chromosome into monomers to permit their segregation at cell division. It also contributes to the segregational stability of plasmids. The sequence is that of Tyrosine recombinase XerC from Rickettsia rickettsii (strain Iowa).